The primary structure comprises 319 residues: Acetyl esterase (319 aa).

The short motif at 91–93 (HGG) is the Involved in the stabilization of the negatively charged intermediate by the formation of the oxyanion hole element. Residues Ser165, Asp262, and His292 contribute to the active site.

This sequence belongs to the 'GDXG' lipolytic enzyme family. In terms of assembly, homodimer. Interacts with MalT and MelA.

The protein localises to the cytoplasm. Its function is as follows. Displays esterase activity towards short chain fatty esters (acyl chain length of up to 8 carbons). Able to hydrolyze triacetylglycerol (triacetin) and tributyrylglycerol (tributyrin), but not trioleylglycerol (triolein) or cholesterol oleate. Negatively regulates MalT activity by antagonizing maltotriose binding. Inhibits MelA galactosidase activity. This is Acetyl esterase from Escherichia coli (strain ATCC 8739 / DSM 1576 / NBRC 3972 / NCIMB 8545 / WDCM 00012 / Crooks).